The following is an 83-amino-acid chain: Phytosulfokines 4 (83 aa).

The N-terminal stretch at 1 to 28 is a signal peptide; that stretch reads MAARTVAVAAALAVLLIFAASSATVAMA. A propeptide spanning residues 29–74 is cleaved from the precursor; that stretch reads GRPTPTTSLDEEAAQAAAQSEIGGGCKEGEGEEECLARRTLTAHTD. Sulfotyrosine is present on residues Tyr-75 and Tyr-77. Residues 80–83 constitute a propeptide that is removed on maturation; that stretch reads QHHN.

Belongs to the phytosulfokine family. In terms of processing, sulfation is important for activity and for the binding to a putative membrane receptor. PSK-alpha is produced by endopeptidase digestion. PSK-beta is produced from PSK-alpha by exopeptidase digestion.

The protein localises to the secreted. Functionally, promotes plant cell differentiation, organogenesis and somatic embryogenesis as well as cell proliferation. The protein is Phytosulfokines 4 (PSK4) of Oryza sativa subsp. japonica (Rice).